The sequence spans 302 residues: Protoheme IX farnesyltransferase (302 aa).

A run of 9 helical transmembrane segments spans residues 24-44 (VVSL…FSGY), 48-68 (FFSV…AGAL), 97-117 (AALV…ELAV), 120-140 (LSAV…TVYL), 147-167 (NIVV…AAVA), 174-194 (SLVL…ALAL), 221-241 (ILCY…LRFS), 245-265 (YMIV…NVYL), and 282-302 (FLLF…GMLI).

The protein belongs to the UbiA prenyltransferase family. Protoheme IX farnesyltransferase subfamily.

It localises to the cell inner membrane. The enzyme catalyses heme b + (2E,6E)-farnesyl diphosphate + H2O = Fe(II)-heme o + diphosphate. The protein operates within porphyrin-containing compound metabolism; heme O biosynthesis; heme O from protoheme: step 1/1. Its function is as follows. Converts heme B (protoheme IX) to heme O by substitution of the vinyl group on carbon 2 of heme B porphyrin ring with a hydroxyethyl farnesyl side group. This chain is Protoheme IX farnesyltransferase, found in Neorickettsia sennetsu (strain ATCC VR-367 / Miyayama) (Ehrlichia sennetsu).